We begin with the raw amino-acid sequence, 317 residues long: Malate dehydrogenase (317 aa).

NAD(+)-binding positions include 10 to 15 (GGGQIG) and Asp-34. Positions 83 and 89 each coordinate substrate. Residues Asn-96 and 119–121 (ISN) contribute to the NAD(+) site. 2 residues coordinate substrate: Asn-121 and Arg-152. His-176 functions as the Proton acceptor in the catalytic mechanism.

Belongs to the LDH/MDH superfamily. MDH type 3 family.

It catalyses the reaction (S)-malate + NAD(+) = oxaloacetate + NADH + H(+). Catalyzes the reversible oxidation of malate to oxaloacetate. The polypeptide is Malate dehydrogenase (Citrifermentans bemidjiense (strain ATCC BAA-1014 / DSM 16622 / JCM 12645 / Bem) (Geobacter bemidjiensis)).